Reading from the N-terminus, the 353-residue chain is S-adenosylmethionine:tRNA ribosyltransferase-isomerase (353 aa).

It belongs to the QueA family. In terms of assembly, monomer.

It localises to the cytoplasm. It catalyses the reaction 7-aminomethyl-7-carbaguanosine(34) in tRNA + S-adenosyl-L-methionine = epoxyqueuosine(34) in tRNA + adenine + L-methionine + 2 H(+). Its pathway is tRNA modification; tRNA-queuosine biosynthesis. Transfers and isomerizes the ribose moiety from AdoMet to the 7-aminomethyl group of 7-deazaguanine (preQ1-tRNA) to give epoxyqueuosine (oQ-tRNA). This chain is S-adenosylmethionine:tRNA ribosyltransferase-isomerase, found in Dinoroseobacter shibae (strain DSM 16493 / NCIMB 14021 / DFL 12).